The following is a 243-amino-acid chain: Large ribosomal subunit protein uL3 (243 aa).

2 disordered regions span residues 139–164 (VSHR…KMPG) and 218–243 (KPGK…GEGA). N5-methylglutamine is present on Q151. Residues 218–229 (KPGKFKLADGGD) are compositionally biased toward basic and acidic residues. A compositionally biased stretch (low complexity) spans 230-243 (KAAAAPEATAGEGA).

The protein belongs to the universal ribosomal protein uL3 family. Part of the 50S ribosomal subunit. Forms a cluster with proteins L14 and L19. Methylated by PrmB.

Functionally, one of the primary rRNA binding proteins, it binds directly near the 3'-end of the 23S rRNA, where it nucleates assembly of the 50S subunit. The sequence is that of Large ribosomal subunit protein uL3 from Afipia carboxidovorans (strain ATCC 49405 / DSM 1227 / KCTC 32145 / OM5) (Oligotropha carboxidovorans).